The chain runs to 198 residues: Pyridoxine/pyridoxamine 5'-phosphate oxidase 2 (198 aa).

Residues arginine 42, 59–60, lysine 66, and 121–122 each bind FMN; these read NT and RS.

The protein belongs to the pyridoxamine 5'-phosphate oxidase family. As to quaternary structure, homodimer. Requires FMN as cofactor.

The catalysed reaction is pyridoxamine 5'-phosphate + O2 + H2O = pyridoxal 5'-phosphate + H2O2 + NH4(+). The enzyme catalyses pyridoxine 5'-phosphate + O2 = pyridoxal 5'-phosphate + H2O2. It participates in cofactor metabolism; pyridoxal 5'-phosphate salvage; pyridoxal 5'-phosphate from pyridoxamine 5'-phosphate: step 1/1. It functions in the pathway cofactor metabolism; pyridoxal 5'-phosphate salvage; pyridoxal 5'-phosphate from pyridoxine 5'-phosphate: step 1/1. Its function is as follows. Catalyzes the oxidation of either pyridoxine 5'-phosphate (PNP) or pyridoxamine 5'-phosphate (PMP) into pyridoxal 5'-phosphate (PLP). Has an in vitro catalytic efficiency for PNP approximately 300-fold lower than that of PPOX1. The protein is Pyridoxine/pyridoxamine 5'-phosphate oxidase 2 (PPOX2) of Arabidopsis thaliana (Mouse-ear cress).